A 513-amino-acid polypeptide reads, in one-letter code: MQLNPSEISELIKSKIEGLSVTSEFRTQGTIVSLTDGIVRVHGLSDVMQGEMLEFPGGTFGLALNLERDSVGAVILGAYEHLKEGDIVKCTSRILEVPVGEALLGRVVNALGQPIDGKGPIAAEGTEPIEKIAPGVVWRKSVDQPVQTGLKSIDSMVPVGRGQRELIIGDRQTGKTAVAIDAIINQKGEDVICIYVAIGQKASSIANVVRKLEEVGAMAYTIVVVASASESAAMQYIAPYSGCTMGEYFRDKGQDALIVYDDLTKQAWAYRQISLLLRRPPGREAYPGDVFYLHSRLLERAARVNADYVEKATGGKVKGKTGSLTALPIIETQAGDVTAFVPTNVISITDGQIFLESDLFNAGIRPAINAGISVSRVGGAAQTKVIKKLGGGIRLALAQYRELAAFAQFASDLDEATRKQLERGKMATELMKQSQYATLKVSEMALTLFALNKGYFDDVDIKRALAFESALKSHIRSHHGAILDKIEASKELDAETEKALEAAIQEFKQNGTY.

169–176 contacts ATP; the sequence is GDRQTGKT.

It belongs to the ATPase alpha/beta chains family. As to quaternary structure, F-type ATPases have 2 components, CF(1) - the catalytic core - and CF(0) - the membrane proton channel. CF(1) has five subunits: alpha(3), beta(3), gamma(1), delta(1), epsilon(1). CF(0) has three main subunits: a(1), b(2) and c(9-12). The alpha and beta chains form an alternating ring which encloses part of the gamma chain. CF(1) is attached to CF(0) by a central stalk formed by the gamma and epsilon chains, while a peripheral stalk is formed by the delta and b chains.

Its subcellular location is the cell inner membrane. The enzyme catalyses ATP + H2O + 4 H(+)(in) = ADP + phosphate + 5 H(+)(out). In terms of biological role, produces ATP from ADP in the presence of a proton gradient across the membrane. The alpha chain is a regulatory subunit. The chain is ATP synthase subunit alpha from Nitrosomonas europaea (strain ATCC 19718 / CIP 103999 / KCTC 2705 / NBRC 14298).